A 1679-amino-acid polypeptide reads, in one-letter code: Lysophospholipase NTE1 (1679 aa).

Positions 1-20 (MRSMNCTTNNTNNTGQNTKN) are enriched in low complexity. A disordered region spans residues 1 to 21 (MRSMNCTTNNTNNTGQNTKNS). The Cytoplasmic portion of the chain corresponds to 1–49 (MRSMNCTTNNTNNTGQNTKNSLGSSFNSSNYTSYRFQTCLTDQIISEAQ). A helical membrane pass occupies residues 50 to 70 (TWSLSSLFNFSWVVSYFVMGA). Topologically, residues 71–103 (SRMIFRYGWYLATLSLLRIPKWIFFKLHHVQFT) are lumenal. A helical transmembrane segment spans residues 104-124 (LSFWLILFALAVIVFVTYTIM). Residues 125 to 1679 (KERILSQYKR…EFLLHRRNSI (1555 aa)) lie on the Cytoplasmic side of the membrane. Basic and acidic residues predominate over residues 261-274 (SDKDHGDETDHSDT). A disordered region spans residues 261-304 (SDKDHGDETDHSDTDGLDDQDRDEEDEEEDDDIDNYDTKSCSSN). The span at 275 to 295 (DGLDDQDRDEEDEEEDDDIDN) shows a compositional bias: acidic residues. A phosphoserine mark is found at Ser300 and Ser312. 2 disordered regions span residues 498–527 (SSGS…KPSD) and 586–672 (DILS…VSPR). Composition is skewed to polar residues over residues 592–606 (PIHN…GINT) and 630–652 (FSSL…LDNT). A phosphoserine mark is found at Ser632, Ser634, Ser653, Ser661, Ser670, Ser680, and Ser739. The tract at residues 775-800 (KEYTISNKRHNKSKSQDKKKPRAYKE) is disordered. The span at 788-800 (KSQDKKKPRAYKE) shows a compositional bias: basic and acidic residues. Thr803 carries the phosphothreonine modification. A nucleoside 3',5'-cyclic phosphate contacts are provided by residues 803–947 (TPNL…LTKL) and 943–1074 (SLTK…VAKK). The interval 855 to 882 (SSSVVSSMSKPEQVSAQSSHKGENPHHT) is disordered. A compositionally biased stretch (polar residues) spans 862–873 (MSKPEQVSAQSS). In terms of domain architecture, PNPLA spans 1373–1537 (LVLGGGGARG…VDNLPVTEMR (165 aa)). The GXGXXG signature appears at 1377–1382 (GGGARG). The GXSXG motif lies at 1404–1408 (GTSIG). Residue Ser1406 is the Nucleophile of the active site. Asp1524 (proton acceptor) is an active-site residue. A DGA/G motif is present at residues 1524-1526 (DGG).

This sequence belongs to the NTE family.

The protein localises to the endoplasmic reticulum membrane. It localises to the lipid droplet. The enzyme catalyses a 1-acyl-sn-glycero-3-phosphocholine + H2O = sn-glycerol 3-phosphocholine + a fatty acid + H(+). It catalyses the reaction a 1,2-diacyl-sn-glycero-3-phosphocholine + 2 H2O = sn-glycerol 3-phosphocholine + 2 a carboxylate + 2 H(+). Its activity is regulated as follows. Positively regulated by SEC14. Inhibited by organophosphorus esters in the order phenyl saligenin phosphate (PSP) &gt; phenyldipentyl phosphinate (PDPP) = diisopropyl fluorophosphate (DFP) &gt; and paraoxon (PXN). In terms of biological role, intracellular phospholipase B that catalyzes the double deacylation of phosphatidylcholine (PC) to glycerophosphocholine (GroPCho). Plays an important role in membrane lipid homeostasis. Responsible for the rapid PC turnover in response to inositol, elevated temperatures, or when choline is present in the growth medium. NTE1 activity impacts the repressing transcriptional activity of OPI1, the main regulator of phospholipid synthesis gene transcription. In Saccharomyces cerevisiae (strain ATCC 204508 / S288c) (Baker's yeast), this protein is Lysophospholipase NTE1 (NTE1).